The following is a 331-amino-acid chain: Beta-ketoacyl-[acyl-carrier-protein] synthase III (331 aa).

Active-site residues include Cys-115 and His-255. The interval 256–260 is ACP-binding; that stretch reads QANFR. Asn-285 is an active-site residue.

The protein belongs to the thiolase-like superfamily. FabH family. Homodimer.

Its subcellular location is the cytoplasm. It carries out the reaction malonyl-[ACP] + acetyl-CoA + H(+) = 3-oxobutanoyl-[ACP] + CO2 + CoA. It functions in the pathway lipid metabolism; fatty acid biosynthesis. Its function is as follows. Catalyzes the condensation reaction of fatty acid synthesis by the addition to an acyl acceptor of two carbons from malonyl-ACP. Catalyzes the first condensation reaction which initiates fatty acid synthesis and may therefore play a role in governing the total rate of fatty acid production. Possesses both acetoacetyl-ACP synthase and acetyl transacylase activities. Its substrate specificity determines the biosynthesis of branched-chain and/or straight-chain of fatty acids. This is Beta-ketoacyl-[acyl-carrier-protein] synthase III from Helicobacter pylori (strain J99 / ATCC 700824) (Campylobacter pylori J99).